A 205-amino-acid polypeptide reads, in one-letter code: Thymidine kinase (205 aa).

Residues 9–16 and 88–91 each bind ATP; these read SAMNAGKT and DECH. E89 acts as the Proton acceptor in catalysis. Residues C146, C148, C183, and H186 each contribute to the Zn(2+) site.

This sequence belongs to the thymidine kinase family. Homotetramer.

Its subcellular location is the cytoplasm. It carries out the reaction thymidine + ATP = dTMP + ADP + H(+). This chain is Thymidine kinase, found in Blochmanniella pennsylvanica (strain BPEN).